The following is a 145-amino-acid chain: 3-hydroxyacyl-[acyl-carrier-protein] dehydratase FabZ (145 aa).

Residue H47 is part of the active site.

This sequence belongs to the thioester dehydratase family. FabZ subfamily.

The protein resides in the cytoplasm. It carries out the reaction a (3R)-hydroxyacyl-[ACP] = a (2E)-enoyl-[ACP] + H2O. Its function is as follows. Involved in unsaturated fatty acids biosynthesis. Catalyzes the dehydration of short chain beta-hydroxyacyl-ACPs and long chain saturated and unsaturated beta-hydroxyacyl-ACPs. The protein is 3-hydroxyacyl-[acyl-carrier-protein] dehydratase FabZ of Methylobacillus flagellatus (strain ATCC 51484 / DSM 6875 / VKM B-1610 / KT).